The primary structure comprises 254 residues: Hydrolase tropI (254 aa).

Residues cysteine 141, aspartate 187, and histidine 219 contribute to the active site.

Belongs to the dienelactone hydrolase family.

It participates in secondary metabolite biosynthesis. Hydrolase; part of the gene cluster that mediates the biosynthesis of the tropolone class of fungal maleic anhydrides. The pathway begins with the synthesis of 3-methylorcinaldehyde by the non-reducing polyketide synthase (PKS) tropA. 3-methylorcinaldehyde is the substrate for the FAD-dependent monooxygenase tropB to yield a dearomatized hydroxycyclohexadione. The 2-oxoglutarate-dependent dioxygenase tropC then performs the oxidative ring expansion to provide the first tropolone metabolite stipitaldehyde. Trop D converts stipitaldehyde into stipitacetal which is in turn converted to stipitalide by the short-chain dehydrogenase/reductase tropE. The next steps involve tropF, tropG, tropH, tropI and tropJ to form successive tropolone maleic anhydrides including stipitaldehydic, stipitatonic and stipitatic acids. The polypeptide is Hydrolase tropI (Talaromyces stipitatus (strain ATCC 10500 / CBS 375.48 / QM 6759 / NRRL 1006) (Penicillium stipitatum)).